A 200-amino-acid polypeptide reads, in one-letter code: Outer-membrane lipoprotein carrier protein (200 aa).

A signal peptide spans 1-18; that stretch reads MKAVVFAMVMAVSFNVFA.

It belongs to the LolA family. In terms of assembly, monomer.

Its subcellular location is the periplasm. Functionally, participates in the translocation of lipoproteins from the inner membrane to the outer membrane. Only forms a complex with a lipoprotein if the residue after the N-terminal Cys is not an aspartate (The Asp acts as a targeting signal to indicate that the lipoprotein should stay in the inner membrane). In Idiomarina loihiensis (strain ATCC BAA-735 / DSM 15497 / L2-TR), this protein is Outer-membrane lipoprotein carrier protein.